The sequence spans 373 residues: 3-dehydroquinate synthase (373 aa).

NAD(+) is bound by residues 67–72 (EGEETK), 101–105 (GVILD), 125–126 (TT), Lys-138, and Lys-147. Zn(2+) is bound by residues Glu-180, His-240, and His-256.

The protein belongs to the sugar phosphate cyclases superfamily. Dehydroquinate synthase family. NAD(+) is required as a cofactor. The cofactor is Co(2+). Requires Zn(2+) as cofactor.

Its subcellular location is the cytoplasm. The catalysed reaction is 7-phospho-2-dehydro-3-deoxy-D-arabino-heptonate = 3-dehydroquinate + phosphate. The protein operates within metabolic intermediate biosynthesis; chorismate biosynthesis; chorismate from D-erythrose 4-phosphate and phosphoenolpyruvate: step 2/7. Catalyzes the conversion of 3-deoxy-D-arabino-heptulosonate 7-phosphate (DAHP) to dehydroquinate (DHQ). The sequence is that of 3-dehydroquinate synthase from Chlamydia trachomatis serovar L2 (strain ATCC VR-902B / DSM 19102 / 434/Bu).